Here is a 506-residue protein sequence, read N- to C-terminus: Mitogen-activated protein kinase 13 (506 aa).

A Protein kinase domain is found at 13–304; that stretch reads YQIQEVVGKG…AEEALADPYF (292 aa). Residues 19–27 and Lys-42 each bind ATP; that span reads VGKGSYGVV. Asp-139 (proton acceptor) is an active-site residue. Thr-175 carries the phosphothreonine modification. Positions 175-177 match the TXY motif; it reads TDY. Residue Tyr-177 is modified to Phosphotyrosine. A disordered region spans residues 384–421; sequence YSRGERSTPLRRQHASLPRERVCSSVDSNNQDSDNEER.

Belongs to the protein kinase superfamily. CMGC Ser/Thr protein kinase family. MAP kinase subfamily. Post-translationally, dually phosphorylated on Thr-175 and Tyr-177, which activates the enzyme.

It carries out the reaction L-seryl-[protein] + ATP = O-phospho-L-seryl-[protein] + ADP + H(+). The enzyme catalyses L-threonyl-[protein] + ATP = O-phospho-L-threonyl-[protein] + ADP + H(+). With respect to regulation, activated by threonine and tyrosine phosphorylation. The protein is Mitogen-activated protein kinase 13 (MPK13) of Oryza sativa subsp. indica (Rice).